A 201-amino-acid chain; its full sequence is MKWVWALLLLAALGSGRAERDCRVSSFRVKENFDKARFSGTWYAMAKKDPEGLFLQDNIVAEFSVDETGQMSATAKGRVRLLNNWDVCADMVGTFTDTEDPAKFKMKYWGVASFLQKGNDDHWIVDTDYDTYAVQYSCRLLNLDGTCADSYSFVFSRDPNGLPPEAQKIVRQRQEELCLARQYRLIVHNGYCDGRSERNLL.

Positions 1-18 (MKWVWALLLLAALGSGRA) are cleaved as a signal peptide. Cystine bridges form between Cys22-Cys178, Cys88-Cys192, and Cys138-Cys147. Gln116 contacts substrate. At Arg139 the chain carries Omega-N-methylarginine.

Belongs to the calycin superfamily. Lipocalin family. In terms of assembly, interacts with TTR. Interaction with TTR prevents its loss by filtration through the kidney glomeruli. Interacts with STRA6. Detected in blood plasma and in urine (at protein level).

Its subcellular location is the secreted. Functionally, retinol-binding protein that mediates retinol transport in blood plasma. Delivers retinol from the liver stores to the peripheral tissues. Transfers the bound all-trans retinol to STRA6, that then facilitates retinol transport across the cell membrane. This is Retinol-binding protein 4 (RBP4) from Homo sapiens (Human).